The primary structure comprises 94 residues: Protein EGG APPARATUS-1 (94 aa).

The Cytoplasmic portion of the chain corresponds to 1–15 (MSSCPAIVNMKDDDG). Residues 16-36 (IGAMGAAVAFAAMGVFGIYFL) traverse the membrane as a helical; Signal-anchor for type II membrane protein segment. Residues 37–94 (WPVVGPTSAGMMMKAPGAAGWVICRAVFEANPQLYFTILRTAGAAAAAATFAACSIAS) lie on the Extracellular side of the membrane.

Post-translationally, possible proteolysis of the C-terminal region from the predicted transmembrane domain to permit secretion and transport of the mature protein to the cell walls of the nucellus, allowing the spreading from the egg cell apparatus to the micropylar opening of the ovule. Expressed only in the egg apparatus, consisting of the egg cell and two synergids. Not detected in the central cell, antipodals, and nucellar and integumental cells.

The protein localises to the membrane. Involved in short-range signaling required for pollen tube attraction by the female gametophyte. Required for female fertility. This Zea mays (Maize) protein is Protein EGG APPARATUS-1 (Ea1).